The following is a 387-amino-acid chain: Eukaryotic translation initiation factor 3 subunit M (387 aa).

One can recognise a PCI domain in the interval 181–340 (LSSKVMIELL…RKVHISSTMH (160 aa)).

This sequence belongs to the eIF-3 subunit M family. As to quaternary structure, component of the eukaryotic translation initiation factor 3 (eIF-3) complex. The eIF-3 complex interacts with pix.

It localises to the cytoplasm. The protein resides in the golgi apparatus. In terms of biological role, component of the eukaryotic translation initiation factor 3 (eIF-3) complex, which is involved in protein synthesis of a specialized repertoire of mRNAs and, together with other initiation factors, stimulates binding of mRNA and methionyl-tRNAi to the 40S ribosome. The eIF-3 complex specifically targets and initiates translation of a subset of mRNAs involved in cell proliferation. The sequence is that of Eukaryotic translation initiation factor 3 subunit M from Drosophila persimilis (Fruit fly).